A 199-amino-acid polypeptide reads, in one-letter code: Transgelin-3 (199 aa).

The Calponin-homology (CH) domain maps to 24 to 136; that stretch reads ADLENKLVDW…RTLMALGSVA (113 aa). At Ser163 the chain carries Phosphoserine. A Calponin-like repeat occupies 174 to 199; sequence IGLQMGSNKGASQAGMTGYGMPRQIM. Positions 178–188 are enriched in polar residues; that stretch reads MGSNKGASQAG. The segment at 178–199 is disordered; sequence MGSNKGASQAGMTGYGMPRQIM.

The protein belongs to the calponin family.

The protein is Transgelin-3 (TAGLN3) of Bos taurus (Bovine).